The chain runs to 823 residues: Putative ankyrin repeat domain-containing protein 20A4 (823 aa).

5 ANK repeats span residues 66–95 (QHRT…QIDV), 99–128 (ENRT…NPNL), 132–161 (YGNT…HIEA), 165–194 (DNNT…SSHA), and 198–227 (LRRS…DVFA). 2 disordered regions span residues 301-343 (VPEK…EVED) and 356-405 (QTLR…NICD). Positions 371–384 (EQQRHERSEKKQPQ) are enriched in basic and acidic residues. 3 coiled-coil regions span residues 431 to 480 (KKLK…KQLE), 565 to 724 (EMIT…NNST), and 776 to 806 (FVLE…KTEV).

The polypeptide is Putative ankyrin repeat domain-containing protein 20A4 (Homo sapiens (Human)).